The primary structure comprises 209 residues: UPF0319 protein VFMJ11_1730 (209 aa).

A signal peptide spans 1–21; the sequence is MKIQSIFAASFCLLSSISAHA.

It belongs to the UPF0319 family.

This Aliivibrio fischeri (strain MJ11) (Vibrio fischeri) protein is UPF0319 protein VFMJ11_1730.